The primary structure comprises 443 residues: Probable D-serine dehydratase (443 aa).

The residue at position 116 (K116) is an N6-(pyridoxal phosphate)lysine.

Belongs to the serine/threonine dehydratase family. DsdA subfamily. It depends on pyridoxal 5'-phosphate as a cofactor.

The catalysed reaction is D-serine = pyruvate + NH4(+). The protein is Probable D-serine dehydratase of Bacillus cereus (strain ATCC 14579 / DSM 31 / CCUG 7414 / JCM 2152 / NBRC 15305 / NCIMB 9373 / NCTC 2599 / NRRL B-3711).